We begin with the raw amino-acid sequence, 442 residues long: Adenylosuccinate synthetase (442 aa).

GTP contacts are provided by residues 16 to 22 and 44 to 46; these read GDEGKGK and GHT. The active-site Proton acceptor is the Asp17. 2 residues coordinate Mg(2+): Asp17 and Gly44. IMP-binding positions include 17-20, 42-45, Thr133, Arg147, Gln228, Thr243, and Arg307; these read DEGK and NAGH. Residue His45 is the Proton donor of the active site. Position 303-309 (303-309) interacts with substrate; that stretch reads AVTGRPR. GTP contacts are provided by residues Arg309, 335–337, and 417–419; these read KLD and STG.

It belongs to the adenylosuccinate synthetase family. Homodimer. Mg(2+) serves as cofactor.

The protein resides in the cytoplasm. The enzyme catalyses IMP + L-aspartate + GTP = N(6)-(1,2-dicarboxyethyl)-AMP + GDP + phosphate + 2 H(+). It functions in the pathway purine metabolism; AMP biosynthesis via de novo pathway; AMP from IMP: step 1/2. Its function is as follows. Plays an important role in the de novo pathway of purine nucleotide biosynthesis. Catalyzes the first committed step in the biosynthesis of AMP from IMP. The sequence is that of Adenylosuccinate synthetase from Koribacter versatilis (strain Ellin345).